The sequence spans 619 residues: Lateral signaling target protein 2 homolog (619 aa).

An FYVE-type zinc finger spans residues 501-561 (DSDCEQCTAC…VCNLCFLYKI (61 aa)). Zn(2+)-binding residues include Cys507, Cys510, Cys523, Cys526, Cys531, Cys534, Cys553, and Cys556. The tract at residues 598-619 (HERSQDGSQSNESPTATTATTI) is disordered. Residues 603–619 (DGSQSNESPTATTATTI) are compositionally biased toward polar residues.

Belongs to the lst-2 family.

Functionally, negative regulator of epidermal growth factor receptor (EGFR) signaling. This chain is Lateral signaling target protein 2 homolog, found in Brugia malayi (Filarial nematode worm).